Here is a 668-residue protein sequence, read N- to C-terminus: Cyclin-dependent kinase 11.2 (668 aa).

Positions 1 to 265 (MSNYSTNGSR…EQWESMTENE (265 aa)) are disordered. Composition is skewed to basic and acidic residues over residues 35 to 73 (KTKEERYRDKEKERDHERHHDRERRDDRYRKVDSRDHRD), 85 to 127 (YCRD…DSLR), and 140 to 163 (LPDDGKLFDRILDPNYKKKEKTVM). The span at 164 to 181 (EVEDVEMSPVEMLDEEEV) shows a compositional bias: acidic residues. 2 stretches are compositionally biased toward basic and acidic residues: residues 197 to 212 (NEPEEKDYKSEGDPES) and 245 to 265 (PDDKYGKTPDKEQWESMTENE). The Protein kinase domain maps to 304–600 (YVILNVIAEG…ASEALQHDWF (297 aa)). ATP is bound by residues 310–318 (IAEGTYGEV) and K333. D432 functions as the Proton acceptor in the catalytic mechanism.

The protein belongs to the protein kinase superfamily. CMGC Ser/Thr protein kinase family. CDC2/CDKX subfamily. Expressed in somatic cells and at varying levels throughout the germline (at protein level). Highly expressed in the germ line of hermaphrodites (at protein level).

It localises to the nucleus. It is found in the cytoplasm. It carries out the reaction L-seryl-[protein] + ATP = O-phospho-L-seryl-[protein] + ADP + H(+). The catalysed reaction is L-threonyl-[protein] + ATP = O-phospho-L-threonyl-[protein] + ADP + H(+). Probable cyclin-dependent kinase whose activity is most likely regulated by the cyclin cyl-1/Cylin-L. Acts partially redundantly with cdk-11.1 to ensure embryonic viability. In contrast to cdk-11.1, not essential for male and female fertility. The protein is Cyclin-dependent kinase 11.2 of Caenorhabditis elegans.